Reading from the N-terminus, the 191-residue chain is Ribonuclease MC (191 aa).

Q9 provides a ligand contact to RNA. A disulfide bond links C15 and C23. Residues H34, 72–73 (NV), R75, F81, 84–85 (HE), and 88–89 (KH) each bind RNA. Residue H34 is the Proton donor of the active site. Disulfide bonds link C48–C92, C152–C185, and C169–C180. E85 is a catalytic residue. Residue H89 is the Proton acceptor of the active site.

This sequence belongs to the RNase T2 family.

The catalysed reaction is a ribonucleotidyl-ribonucleotide-RNA + H2O = a 3'-end 3'-phospho-ribonucleotide-RNA + a 5'-end dephospho-ribonucleoside-RNA + H(+). In terms of biological role, ribonuclease cleaving preferentially the 5'-side of uridine. This chain is Ribonuclease MC, found in Momordica charantia (Bitter gourd).